The primary structure comprises 349 residues: Anthranilate phosphoribosyltransferase (349 aa).

Residues glycine 81, 84–85 (GD), threonine 89, 91–94 (NVST), 109–117 (KHGNRAASS), and alanine 121 contribute to the 5-phospho-alpha-D-ribose 1-diphosphate site. Position 81 (glycine 81) interacts with anthranilate. Residue serine 93 participates in Mg(2+) binding. Anthranilate is bound at residue asparagine 112. Position 167 (arginine 167) interacts with anthranilate. Residues aspartate 226 and glutamate 227 each coordinate Mg(2+).

It belongs to the anthranilate phosphoribosyltransferase family. Homodimer. Mg(2+) serves as cofactor.

It catalyses the reaction N-(5-phospho-beta-D-ribosyl)anthranilate + diphosphate = 5-phospho-alpha-D-ribose 1-diphosphate + anthranilate. It participates in amino-acid biosynthesis; L-tryptophan biosynthesis; L-tryptophan from chorismate: step 2/5. Catalyzes the transfer of the phosphoribosyl group of 5-phosphorylribose-1-pyrophosphate (PRPP) to anthranilate to yield N-(5'-phosphoribosyl)-anthranilate (PRA). This is Anthranilate phosphoribosyltransferase from Methylocella silvestris (strain DSM 15510 / CIP 108128 / LMG 27833 / NCIMB 13906 / BL2).